An 831-amino-acid polypeptide reads, in one-letter code: Translation initiation factor IF-2 (831 aa).

Residues 116–157 (IEPLETDKEVEQKQQNTEENKVEVSAKIVQDDEDIPSQIPKK) form a disordered region. A compositionally biased stretch (basic and acidic residues) spans 117 to 139 (EPLETDKEVEQKQQNTEENKVEV). The tr-type G domain occupies 329–499 (TRAPVVTVMG…LLIAEMQDLK (171 aa)). Residues 338 to 345 (GHVDHGKT) form a G1 region. A GTP-binding site is contributed by 338 to 345 (GHVDHGKT). The G2 stretch occupies residues 363-367 (GITQH). Residues 385–388 (DTPG) are G3. Residues 385–389 (DTPGH) and 439–442 (NKID) each bind GTP. A G4 region spans residues 439 to 442 (NKID). Residues 475–477 (SAL) form a G5 region.

Belongs to the TRAFAC class translation factor GTPase superfamily. Classic translation factor GTPase family. IF-2 subfamily.

Its subcellular location is the cytoplasm. Functionally, one of the essential components for the initiation of protein synthesis. Protects formylmethionyl-tRNA from spontaneous hydrolysis and promotes its binding to the 30S ribosomal subunits. Also involved in the hydrolysis of GTP during the formation of the 70S ribosomal complex. The sequence is that of Translation initiation factor IF-2 from Rickettsia conorii (strain ATCC VR-613 / Malish 7).